The primary structure comprises 270 residues: Splicing factor YJU2 (270 aa).

The tract at residues 1–32 is disordered; the sequence is MSERKVLNKYIPPDYDPSIRPPKKKKKFQGPN. The Zn(2+) site is built by Cys-48, Cys-51, Cys-84, and Cys-87. Positions 251 to 270 are disordered; the sequence is PNFQPPKYAKRKMEKKKVLV. Residues 258-270 are compositionally biased toward basic residues; it reads YAKRKMEKKKVLV.

This sequence belongs to the CWC16 family. YJU2 subfamily. Component of the spliceosome. Present in the activated B complex, the catalytically activated B* complex which catalyzes the branching, the catalytic step 1 C complex catalyzing the exon ligation, and the postcatalytic P complex containing the ligated exons (mRNA) and the excised lariat intron. Belongs to the 40S cdc5-associated complex (or cwf complex), a spliceosome sub-complex reminiscent of a late-stage spliceosome composed of the U2, U5 and U6 snRNAs and at least brr2, cdc5, cwf2/prp3, cwf3/syf1, cwf4/syf3, cwf5/ecm2, spp42/cwf6, cwf7/spf27, cwf8, cwf9, cwf10, cwf11, cwf12, prp45/cwf13, cwf14, cwf15, cwf16, cwf17, cwf18, cwf19, cwf20, cwf21, cwf22, cwf23, cwf24, cwf25, cwf26, cyp7/cwf27, cwf28, cwf29/ist3, lea1, msl1, prp5/cwf1, prp10, prp12/sap130, prp17, prp22, sap61, sap62, sap114, sap145, slu7, smb1, smd1, smd3, smf1, smg1 and syf2.

The protein resides in the nucleus. In terms of biological role, part of the spliceosome which catalyzes two sequential transesterification reactions, first the excision of the non-coding intron from pre-mRNA and then the ligation of the coding exons to form the mature mRNA. Plays a role in stabilizing the structure of the spliceosome catalytic core and docking of the branch helix into the active site, producing 5'-exon and lariat intron-3'-intermediates. In Schizosaccharomyces pombe (strain 972 / ATCC 24843) (Fission yeast), this protein is Splicing factor YJU2 (cwf16).